A 611-amino-acid polypeptide reads, in one-letter code: Dihydroxy-acid dehydratase (611 aa).

Aspartate 81 is a Mg(2+) binding site. Residue cysteine 122 participates in [2Fe-2S] cluster binding. Residues aspartate 123 and lysine 124 each contribute to the Mg(2+) site. Position 124 is an N6-carboxylysine (lysine 124). Cysteine 195 is a [2Fe-2S] cluster binding site. Residue glutamate 491 coordinates Mg(2+). The active-site Proton acceptor is serine 517.

Belongs to the IlvD/Edd family. Homodimer. [2Fe-2S] cluster is required as a cofactor. The cofactor is Mg(2+).

It carries out the reaction (2R)-2,3-dihydroxy-3-methylbutanoate = 3-methyl-2-oxobutanoate + H2O. The enzyme catalyses (2R,3R)-2,3-dihydroxy-3-methylpentanoate = (S)-3-methyl-2-oxopentanoate + H2O. The protein operates within amino-acid biosynthesis; L-isoleucine biosynthesis; L-isoleucine from 2-oxobutanoate: step 3/4. Its pathway is amino-acid biosynthesis; L-valine biosynthesis; L-valine from pyruvate: step 3/4. In terms of biological role, functions in the biosynthesis of branched-chain amino acids. Catalyzes the dehydration of (2R,3R)-2,3-dihydroxy-3-methylpentanoate (2,3-dihydroxy-3-methylvalerate) into 2-oxo-3-methylpentanoate (2-oxo-3-methylvalerate) and of (2R)-2,3-dihydroxy-3-methylbutanoate (2,3-dihydroxyisovalerate) into 2-oxo-3-methylbutanoate (2-oxoisovalerate), the penultimate precursor to L-isoleucine and L-valine, respectively. This is Dihydroxy-acid dehydratase from Actinobacillus pleuropneumoniae serotype 3 (strain JL03).